The chain runs to 203 residues: Glutathione S-transferase 2 (203 aa).

The GST N-terminal domain maps to 1-78; sequence MPKVVFHYFG…YLGRKYGLAG (78 aa). Glutathione-binding positions include tyrosine 8, tryptophan 38, lysine 42, 48–50, and 62–63; these read GQM and QS. Residues 80–203 form the GST C-terminal domain; that stretch reads DIEEDFEIDQ…YLDSAPKKEF (124 aa).

It belongs to the GST superfamily. Sigma family. In terms of assembly, homodimer.

The enzyme catalyses RX + glutathione = an S-substituted glutathione + a halide anion + H(+). Functionally, conjugation of reduced glutathione to a wide number of exogenous and endogenous hydrophobic electrophiles. The polypeptide is Glutathione S-transferase 2 (GST2) (Manduca sexta (Tobacco hawkmoth)).